A 382-amino-acid chain; its full sequence is Intermediate transcription factor 3 large subunit (382 aa).

Belongs to the orthopoxvirus OPG150 family. Heterodimerizes with protein A8 to form the virus intermediate transcription factor (VITF)-3.

In terms of biological role, acts with RNA polymerase to initiate transcription from intermediate gene promoters. The protein is Intermediate transcription factor 3 large subunit (OPG150) of Homo sapiens (Human).